The following is a 274-amino-acid chain: WIMGHMVNDISLVDEYLNQGANSLELDVSFNSEGIAEKLYHGYPCDCLRSCTKTVAFSTYLDYIRNITTPGDPKFRNELVLLMLDLKLKQIAPEAAYWAGFDTAEKLLDYYWQNGQSGARAYIILSIEILTHYEFVTGFKHQLQNKGHEEYSAKIGWDFSGNENLEEIHKVMSDLDLKEHIWQGDGITNCLPRGDDRLKEALFRRNTDWYKYIDKVYTWSIDKKSSIRNALRLGVDGVMTNYPERVVEVLQEPEFSSKLRLATYEDDPWARTVL.

Residue H5 is part of the active site. Mg(2+)-binding residues include E25 and D27. Catalysis depends on H41, which acts as the Nucleophile. 2 disulfide bridges follow: C45/C51 and C47/C190. An N-linked (GlcNAc...) asparagine glycan is attached at N66. Position 85 (D85) interacts with Mg(2+).

Belongs to the arthropod phospholipase D family. Class II subfamily. Mg(2+) serves as cofactor. Expressed by the venom gland.

It is found in the secreted. The enzyme catalyses an N-(acyl)-sphingosylphosphocholine = an N-(acyl)-sphingosyl-1,3-cyclic phosphate + choline. It carries out the reaction an N-(acyl)-sphingosylphosphoethanolamine = an N-(acyl)-sphingosyl-1,3-cyclic phosphate + ethanolamine. The catalysed reaction is a 1-acyl-sn-glycero-3-phosphocholine = a 1-acyl-sn-glycero-2,3-cyclic phosphate + choline. It catalyses the reaction a 1-acyl-sn-glycero-3-phosphoethanolamine = a 1-acyl-sn-glycero-2,3-cyclic phosphate + ethanolamine. In terms of biological role, dermonecrotic toxins cleave the phosphodiester linkage between the phosphate and headgroup of certain phospholipids (sphingolipid and lysolipid substrates), forming an alcohol (often choline) and a cyclic phosphate. This toxin acts on sphingomyelin (SM). It may also act on ceramide phosphoethanolamine (CPE), lysophosphatidylcholine (LPC) and lysophosphatidylethanolamine (LPE), but not on lysophosphatidylserine (LPS), and lysophosphatidylglycerol (LPG). It acts by transphosphatidylation, releasing exclusively cyclic phosphate products as second products. Induces dermonecrosis, hemolysis, increased vascular permeability, edema, inflammatory response, and platelet aggregation. This is Dermonecrotic toxin LcsSicTox-betaIC1 from Loxosceles cf. spinulosa (strain GJB-2008) (Recluse spider).